The sequence spans 620 residues: Kelch-like protein 32 (620 aa).

Residues 42–109 form the BTB domain; the sequence is CDITLIAEEQ…AYTGQILLEP (68 aa). Kelch repeat units follow at residues 290–346, 347–398, 399–446, 447–494, 496–547, and 549–599; these read TLYI…VMGD, FLFV…AMEE, YLYA…VADG, LLWI…AVQR, LYVL…VHNG, and IYLV…FLPA.

This is Kelch-like protein 32 (KLHL32) from Homo sapiens (Human).